Here is a 365-residue protein sequence, read N- to C-terminus: Centrosomal protein of 41 kDa B (365 aa).

Residues Met1–Lys14 are compositionally biased toward basic and acidic residues. Disordered stretches follow at residues Met1–Tyr23 and Glu104–Pro123. The Rhodanese domain maps to Glu177–Thr274. The segment at Thr329–Lys365 is disordered. The span at Ser342–Lys365 shows a compositional bias: low complexity.

This sequence belongs to the CEP41 family.

It localises to the cytoplasm. Its subcellular location is the cytoskeleton. The protein localises to the microtubule organizing center. The protein resides in the centrosome. It is found in the cell projection. It localises to the cilium. Its subcellular location is the cilium basal body. Functionally, required during ciliogenesis for tubulin glutamylation in cilium. Probably acts by participating in the transport of tubulin polyglutamylases between the basal body and the cilium. The sequence is that of Centrosomal protein of 41 kDa B (cep41-b) from Xenopus laevis (African clawed frog).